The following is a 1804-amino-acid chain: Collagen alpha-1(XI) chain (1804 aa).

The first 34 residues, 1–34 (MEPWSRWKTKRWIWDLTISTLVLTFLFQAREVRG), serve as a signal peptide directing secretion. A propeptide spans 35–511 (AAPVDILKAL…SKGPTISAQE (477 aa)) (N-terminal propeptide). Intrachain disulfides connect Cys-60-Cys-242 and Cys-181-Cys-235. The Laminin G-like domain occupies 70–242 (DIAYRVTEEA…DYCDHYSPDC (173 aa)). The interval 229-417 (KAAYDYCDHY…DFTETSINGH (189 aa)) is nonhelical region. Asn-351 is a glycosylation site (N-linked (GlcNAc...) asparagine). Positions 418–506 (GAYGEKGQKG…YGGDGSKGPT (89 aa)) are triple-helical region (interrupted). Positions 437-506 (LVEGPPGPAG…YGGDGSKGPT (70 aa)) are disordered. The Collagen-like 1 domain maps to 440–488 (GPPGPAGPAGLMGPPGLQGPSGLPGDPGDRGPPGRPGLPGADGLPGPPG). 2 stretches are compositionally biased toward low complexity: residues 447 to 465 (PAGL…LPGD) and 477 to 494 (LPGA…LMLP). The segment at 507–509 (ISA) is short nonhelical segment. The interval 510-527 (QEAQAQAILQQARIALRG) is telopeptide. The segment at 526–1560 (RGPPGPMGLT…KTRRHTESIQ (1035 aa)) is disordered. The segment at 528–1540 (PPGPMGLTGR…PGPPGPPGEV (1013 aa)) is triple-helical region. Collagen-like domains follow at residues 530–584 (GPMG…GADG), 581–639 (GADG…EIGP), 607–664 (PGDK…PGQP), and 641–698 (GLPG…GPQG). Composition is skewed to gly residues over residues 539–548 (GPVGGPGSAG) and 581–590 (GADGGRGMPG). An Allysine modification is found at Lys-610. Residues 639 to 655 (PRGLPGEAGPRGLLGPR) show a composition bias toward low complexity. Pro residues predominate over residues 697–708 (QGLPGPQGPIGP). Low complexity predominate over residues 715–726 (QGKPGLAGLPGA). Positions 746–804 (GPPGPQGPIGYPGPRGVKGADGVRGLKGSKGEKGEDGFPGFKGDMGLKGDRGEVGQVGP) constitute a Collagen-like 6 domain. Positions 805–814 (RGEDGPEGPK) are enriched in basic and acidic residues. 3 stretches are compositionally biased toward low complexity: residues 873–901 (KPGP…PGPK), 916–925 (RGPQGPQGPV), and 969–979 (PQGPTGETGPI). Gly residues predominate over residues 1040 to 1049 (GLKGGEGPQG). Over residues 1074 to 1083 (RPGPQGPPGP) the composition is skewed to pro residues. Low complexity predominate over residues 1084–1108 (AGEKGAPGEKGPQGPAGRDGVQGPV). The segment covering 1160-1169 (GIAGGDGEAG) has biased composition (gly residues). Composition is skewed to pro residues over residues 1216–1227 (MGPPGPPGPRGP) and 1341–1360 (QPGP…PGKR). Low complexity-rich tracts occupy residues 1383–1392 (AEGPPGKTGP) and 1417–1426 (QGLPGAAGQD). Collagen-like domains are found at residues 1391 to 1449 (GPVG…SKGE), 1442 to 1492 (GDPG…PGPA), and 1481 to 1539 (GAKG…PPGE). Positions 1428–1437 (PPGPLGPPGL) are enriched in pro residues. Residue Lys-1450 is modified to Allysine. Positions 1453–1462 (PGLIGLIGPP) are enriched in low complexity. Positions 1481–1490 (GAKGDGGIPG) are enriched in gly residues. Over residues 1491-1507 (PAGPIGPPGPPGLPGPA) the composition is skewed to pro residues. Positions 1509–1519 (PKGNKGSSGPT) are enriched in low complexity. Residues 1528-1537 (PGPPGPPGPP) show a composition bias toward pro residues. Residues 1541 to 1561 (IQPLPILSPKKTRRHTESIQA) are nonhelical region (C-terminal). A propeptide spans 1562–1804 (DAGDNILDYS…FEVGPACFLG (243 aa)) (C-terminal propeptide). In terms of domain architecture, Fibrillar collagen NC1 spans 1575–1803 (EEIFGSLNSL…GFEVGPACFL (229 aa)). Cys-1605 and Cys-1637 form a disulfide bridge. Asp-1623, Asn-1625, Gln-1626, Cys-1628, and Asp-1631 together coordinate Ca(2+). N-linked (GlcNAc...) asparagine glycans are attached at residues Asn-1638 and Asn-1707. Intrachain disulfides connect Cys-1646/Cys-1801 and Cys-1712/Cys-1755.

The protein belongs to the fibrillar collagen family. In terms of assembly, trimers composed of three different chains: alpha 1(XI), alpha 2(XI), and alpha 3(XI). Alpha 3(XI) is probably a post-translational modification of alpha 1(II). Prolines at the third position of the tripeptide repeating unit (G-X-Y) are hydroxylated in some or all of the chains. In terms of processing, N-glycosylated.

It is found in the secreted. It localises to the extracellular space. The protein resides in the extracellular matrix. Its function is as follows. May play an important role in fibrillogenesis by controlling lateral growth of collagen II fibrils. The polypeptide is Collagen alpha-1(XI) chain (Col11a1) (Rattus norvegicus (Rat)).